The chain runs to 314 residues: ATP synthase gamma chain (314 aa).

It belongs to the ATPase gamma chain family. As to quaternary structure, F-type ATPases have 2 components, CF(1) - the catalytic core - and CF(0) - the membrane proton channel. CF(1) has five subunits: alpha(3), beta(3), gamma(1), delta(1), epsilon(1). CF(0) has three main subunits: a, b and c.

The protein localises to the cellular thylakoid membrane. In terms of biological role, produces ATP from ADP in the presence of a proton gradient across the membrane. The gamma chain is believed to be important in regulating ATPase activity and the flow of protons through the CF(0) complex. In Synechococcus sp. (strain JA-3-3Ab) (Cyanobacteria bacterium Yellowstone A-Prime), this protein is ATP synthase gamma chain.